Reading from the N-terminus, the 335-residue chain is Glyceraldehyde-3-phosphate dehydrogenase (335 aa).

Residues 10–11 (RI), aspartate 33, arginine 77, and serine 119 each bind NAD(+). D-glyceraldehyde 3-phosphate-binding positions include 150–152 (SCT), threonine 181, 210–211 (TG), and arginine 233. Cysteine 151 serves as the catalytic Nucleophile. Residue asparagine 315 participates in NAD(+) binding.

This sequence belongs to the glyceraldehyde-3-phosphate dehydrogenase family. Homotetramer.

Its subcellular location is the cytoplasm. It catalyses the reaction D-glyceraldehyde 3-phosphate + phosphate + NAD(+) = (2R)-3-phospho-glyceroyl phosphate + NADH + H(+). Its pathway is carbohydrate degradation; glycolysis; pyruvate from D-glyceraldehyde 3-phosphate: step 1/5. Catalyzes the oxidative phosphorylation of glyceraldehyde 3-phosphate (G3P) to 1,3-bisphosphoglycerate (BPG) using the cofactor NAD. The first reaction step involves the formation of a hemiacetal intermediate between G3P and a cysteine residue, and this hemiacetal intermediate is then oxidized to a thioester, with concomitant reduction of NAD to NADH. The reduced NADH is then exchanged with the second NAD, and the thioester is attacked by a nucleophilic inorganic phosphate to produce BPG. This Chlamydia pneumoniae (Chlamydophila pneumoniae) protein is Glyceraldehyde-3-phosphate dehydrogenase (gap).